We begin with the raw amino-acid sequence, 543 residues long: uncharacterized protein (543 aa).

The PE domain maps to Met1–Ala93. A disordered region spans residues Gly194–Gly214.

Belongs to the mycobacterial PE family. PGRS subfamily.

This is an uncharacterized protein from Mycobacterium tuberculosis (strain CDC 1551 / Oshkosh).